Reading from the N-terminus, the 444-residue chain is Proline--tRNA ligase (444 aa).

Belongs to the class-II aminoacyl-tRNA synthetase family. ProS type 2 subfamily. As to quaternary structure, homodimer.

The protein localises to the cytoplasm. It carries out the reaction tRNA(Pro) + L-proline + ATP = L-prolyl-tRNA(Pro) + AMP + diphosphate. In terms of biological role, catalyzes the attachment of proline to tRNA(Pro) in a two-step reaction: proline is first activated by ATP to form Pro-AMP and then transferred to the acceptor end of tRNA(Pro). The sequence is that of Proline--tRNA ligase from Bradyrhizobium sp. (strain BTAi1 / ATCC BAA-1182).